The primary structure comprises 448 residues: Inositol polyphosphate 5-phosphatase K (448 aa).

The interval 16–318 is catalytic; the sequence is IHVVTWNVAS…SDHKPVSGTF (303 aa). Residues 318 to 448 are required for interaction with GPR78 and PAK1; sequence FDLELKPLVS…DPLGEAQPQI (131 aa). The tract at residues 321-448 is required for ruffle localization; that stretch reads ELKPLVSAPL…DPLGEAQPQI (128 aa).

The protein belongs to the inositol 1,4,5-trisphosphate 5-phosphatase type II family. As to quaternary structure, interacts with GPR78; necessary for INPP5K localization at the endoplasmic reticulum. Interacts with PAK1; competes with GPR78. Ubiquitously expressed with highest levels in skeletal muscle, heart and kidney.

It localises to the endoplasmic reticulum. The protein resides in the cytoplasm. It catalyses the reaction 1D-myo-inositol 1,4,5-trisphosphate + H2O = 1D-myo-inositol 1,4-bisphosphate + phosphate. The catalysed reaction is 1D-myo-inositol 1,3,4,5-tetrakisphosphate + H2O = 1D-myo-inositol 1,3,4-trisphosphate + phosphate. The enzyme catalyses a 1,2-diacyl-sn-glycero-3-phospho-(1D-myo-inositol-4,5-bisphosphate) + H2O = a 1,2-diacyl-sn-glycero-3-phospho-(1D-myo-inositol 4-phosphate) + phosphate. It carries out the reaction a 1,2-diacyl-sn-glycero-3-phospho-(1D-myo-inositol-3,4,5-trisphosphate) + H2O = a 1,2-diacyl-sn-glycero-3-phospho-(1D-myo-inositol-3,4-bisphosphate) + phosphate. It catalyses the reaction 1,2-dioctanoyl-sn-glycero-3-phospho-(1D-myo-inositol-3,4,5-trisphosphate) + H2O = 1,2-dioctanoyl-sn-glycero-3-phospho-(1D-myo-inositol-3,4-bisphosphate) + phosphate. Its function is as follows. Inositol 5-phosphatase which acts on inositol 1,4,5-trisphosphate, inositol 1,3,4,5-tetrakisphosphate, phosphatidylinositol 4,5-bisphosphate and phosphatidylinositol 3,4,5-trisphosphate. Has 6-fold higher affinity for phosphatidylinositol 4,5-bisphosphate than for inositol 1,4,5-trisphosphate. Negatively regulates assembly of the actin cytoskeleton. Controls insulin-dependent glucose uptake among inositol 3,4,5-trisphosphate phosphatases; therefore, is the specific regulator for insulin signaling in skeletal muscle. The sequence is that of Inositol polyphosphate 5-phosphatase K from Homo sapiens (Human).